We begin with the raw amino-acid sequence, 557 residues long: 2,3-bisphosphoglycerate-independent phosphoglycerate mutase 1 (557 aa).

Positions 27 and 80 each coordinate Mn(2+). Ser80 serves as the catalytic Phosphoserine intermediate. Substrate contacts are provided by residues His139, 169 to 170 (RD), Arg205, Arg212, 285 to 288 (RADR), and Lys360. Asp429, His433, Asp470, His471, and His500 together coordinate Mn(2+).

This sequence belongs to the BPG-independent phosphoglycerate mutase family. As to quaternary structure, monomer. The cofactor is Mn(2+).

The protein localises to the cytoplasm. It carries out the reaction (2R)-2-phosphoglycerate = (2R)-3-phosphoglycerate. It participates in carbohydrate degradation; glycolysis; pyruvate from D-glyceraldehyde 3-phosphate: step 3/5. Catalyzes the interconversion of 2-phosphoglycerate (2-PGA) and 3-phosphoglycerate (3-PGA). Required for guard cell function (e.g. blue light-, abscisic acid- (ABA), and low CO(2)-regulated stomatal movements) and fertility (e.g. pollen grains production). The protein is 2,3-bisphosphoglycerate-independent phosphoglycerate mutase 1 (PGM1) of Arabidopsis thaliana (Mouse-ear cress).